A 702-amino-acid polypeptide reads, in one-letter code: Polyribonucleotide nucleotidyltransferase (702 aa).

Residues D485 and D491 each coordinate Mg(2+). The 61-residue stretch at 552-612 folds into the KH domain; sequence PRTEIICIDP…EGVKKAISII (61 aa). The S1 motif domain maps to 622–690; that stretch reads GEIYLGKVTK…NQGRINLSRK (69 aa).

It belongs to the polyribonucleotide nucleotidyltransferase family. Requires Mg(2+) as cofactor.

It localises to the cytoplasm. It catalyses the reaction RNA(n+1) + phosphate = RNA(n) + a ribonucleoside 5'-diphosphate. Involved in mRNA degradation. Catalyzes the phosphorolysis of single-stranded polyribonucleotides processively in the 3'- to 5'-direction. The polypeptide is Polyribonucleotide nucleotidyltransferase (Clostridium botulinum (strain 657 / Type Ba4)).